The chain runs to 325 residues: Gamma-hemolysin component B (325 aa).

A signal peptide spans 1 to 26; the sequence is MKMNKLVKSSVATSMALLLLSGTANA.

Belongs to the aerolysin family. Toxicity requires sequential binding and synergistic association of a class S and a class F component which form heterooligomeric complexes. HlgB (class F) associates with either hlgA thus forming an AB toxin or with hlgC thus forming a CB toxin. Interacts with host AMFR.

The protein localises to the secreted. Its function is as follows. Toxin that seems to act by forming pores in the membrane of the cell. Has a hemolytic and a leucotoxic activity. Promotes host AMFR-mediated inflammation by mediating 'Lys-27'-linked ubiquitination of TAB3, TAK1-TAB3 complex formation and phosphorylation of TAK1/MAP3K7. In turn, activates host NF-kappa-B signaling pathway. This is Gamma-hemolysin component B (hlgB) from Staphylococcus aureus (strain NCTC 8325 / PS 47).